We begin with the raw amino-acid sequence, 365 residues long: Chaperone protein DnaJ (365 aa).

Residues 4-70 (DYYKILGVDR…QKRRMYDQTG (67 aa)) enclose the J domain. The CR-type zinc-finger motif lies at 139–220 (GTEKRIKYRR…CNGTGTVVVN (82 aa)). 8 residues coordinate Zn(2+): C152, C155, C168, C171, C194, C197, C208, and C211. 4 CXXCXGXG motif repeats span residues 152–159 (CPDCNGTG), 168–175 (CPTCNGTG), 194–201 (CQTCGGRG), and 208–215 (CPRCNGTG).

Belongs to the DnaJ family. In terms of assembly, homodimer. It depends on Zn(2+) as a cofactor.

It localises to the cytoplasm. Its function is as follows. Participates actively in the response to hyperosmotic and heat shock by preventing the aggregation of stress-denatured proteins and by disaggregating proteins, also in an autonomous, DnaK-independent fashion. Unfolded proteins bind initially to DnaJ; upon interaction with the DnaJ-bound protein, DnaK hydrolyzes its bound ATP, resulting in the formation of a stable complex. GrpE releases ADP from DnaK; ATP binding to DnaK triggers the release of the substrate protein, thus completing the reaction cycle. Several rounds of ATP-dependent interactions between DnaJ, DnaK and GrpE are required for fully efficient folding. Also involved, together with DnaK and GrpE, in the DNA replication of plasmids through activation of initiation proteins. This is Chaperone protein DnaJ from Thermoplasma acidophilum (strain ATCC 25905 / DSM 1728 / JCM 9062 / NBRC 15155 / AMRC-C165).